Reading from the N-terminus, the 317-residue chain is Transaldolase (317 aa).

Lys132 acts as the Schiff-base intermediate with substrate in catalysis.

It belongs to the transaldolase family. Type 1 subfamily. As to quaternary structure, homodimer.

The protein resides in the cytoplasm. The enzyme catalyses D-sedoheptulose 7-phosphate + D-glyceraldehyde 3-phosphate = D-erythrose 4-phosphate + beta-D-fructose 6-phosphate. Its pathway is carbohydrate degradation; pentose phosphate pathway; D-glyceraldehyde 3-phosphate and beta-D-fructose 6-phosphate from D-ribose 5-phosphate and D-xylulose 5-phosphate (non-oxidative stage): step 2/3. Transaldolase is important for the balance of metabolites in the pentose-phosphate pathway. This Edwardsiella ictaluri (strain 93-146) protein is Transaldolase.